A 519-amino-acid polypeptide reads, in one-letter code: Probable pectinesterase/pectinesterase inhibitor 36 (519 aa).

The first 25 residues, 1-25 (MSTFVKVTDLITIMFFLAIAAVITA), serve as a signal peptide directing secretion. A pectinesterase inhibitor 36 region spans residues 27-141 (NTAELDVLEM…TFVLHEALAF (115 aa)). N-linked (GlcNAc...) asparagine glycans are attached at residues asparagine 92 and asparagine 130. The interval 147-196 (GHMKKRLHGPARQGHGPTRPKHRPTRPNHGPGRSHHGPSRPNQNGGMLVS) is disordered. Residues 164-184 (TRPKHRPTRPNHGPGRSHHGP) are compositionally biased toward basic residues. The segment covering 186–196 (RPNQNGGMLVS) has biased composition (polar residues). Positions 205 to 505 (DFVVARDGSA…FTVSRFIQGD (301 aa)) are pectinesterase 36. Substrate-binding residues include threonine 283 and glutamine 313. The Proton donor; for pectinesterase activity role is filled by aspartate 336. The Nucleophile; for pectinesterase activity role is filled by aspartate 357. The substrate site is built by arginine 425 and tryptophan 427.

The protein in the N-terminal section; belongs to the PMEI family. This sequence in the C-terminal section; belongs to the pectinesterase family. As to expression, expressed in siliques.

Its subcellular location is the secreted. It localises to the cell wall. The catalysed reaction is [(1-&gt;4)-alpha-D-galacturonosyl methyl ester](n) + n H2O = [(1-&gt;4)-alpha-D-galacturonosyl](n) + n methanol + n H(+). It functions in the pathway glycan metabolism; pectin degradation; 2-dehydro-3-deoxy-D-gluconate from pectin: step 1/5. Acts in the modification of cell walls via demethylesterification of cell wall pectin. This Arabidopsis thaliana (Mouse-ear cress) protein is Probable pectinesterase/pectinesterase inhibitor 36 (PME36).